The chain runs to 341 residues: Eukaryotic translation initiation factor 2 subunit 1 (341 aa).

Residues 16 to 87 (EDVVMVNVLS…EKGYIDLSKR (72 aa)) form the S1 motif domain. At serine 51 the chain carries Phosphoserine. A disordered region spans residues 293–341 (AENAQVAGDDDEEDGADQEGMQFDPEKEFNHKGSGAGRANEEDEEEEED). The segment covering 300 to 309 (GDDDEEDGAD) has biased composition (acidic residues).

This sequence belongs to the eIF-2-alpha family. Eukaryotic translation initiation factor 2 eIF2 is a heterotrimeric complex composed of an alpha, a beta and a gamma subunit. Phosphorylation of eIF-2-alpha impairs the recycling of eIF-2 between successive rounds of initiation and thus leads to inhibition of translation.

It is found in the cytoplasm. It localises to the cytosol. EIF-2 functions in the early steps of protein synthesis by forming a ternary complex with GTP and initiator tRNA. This pre-initiation complex mediates ribosomal recognition of a start codon during the scanning process of the leader region. This chain is Eukaryotic translation initiation factor 2 subunit 1, found in Drosophila melanogaster (Fruit fly).